The sequence spans 182 residues: NADH-quinone oxidoreductase subunit B 2 (182 aa).

The [4Fe-4S] cluster site is built by cysteine 47, cysteine 48, cysteine 113, and cysteine 142.

It belongs to the complex I 20 kDa subunit family. NDH-1 is composed of 14 different subunits. Subunits NuoB, C, D, E, F, and G constitute the peripheral sector of the complex. [4Fe-4S] cluster is required as a cofactor.

Its subcellular location is the cell inner membrane. It carries out the reaction a quinone + NADH + 5 H(+)(in) = a quinol + NAD(+) + 4 H(+)(out). Functionally, NDH-1 shuttles electrons from NADH, via FMN and iron-sulfur (Fe-S) centers, to quinones in the respiratory chain. The immediate electron acceptor for the enzyme in this species is believed to be ubiquinone. Couples the redox reaction to proton translocation (for every two electrons transferred, four hydrogen ions are translocated across the cytoplasmic membrane), and thus conserves the redox energy in a proton gradient. In Anaeromyxobacter sp. (strain K), this protein is NADH-quinone oxidoreductase subunit B 2.